We begin with the raw amino-acid sequence, 148 residues long: Ubiquitin-conjugating enzyme E2 28 (148 aa).

In terms of domain architecture, UBC core spans 1–147; the sequence is MASKRILKEL…ARSWTQKYAM (147 aa). Cysteine 85 acts as the Glycyl thioester intermediate in catalysis.

Belongs to the ubiquitin-conjugating enzyme family. In terms of assembly, interacts with SINAT5. As to expression, expressed in seeds, pistils, siliques, hypocotyls and leaves.

It catalyses the reaction S-ubiquitinyl-[E1 ubiquitin-activating enzyme]-L-cysteine + [E2 ubiquitin-conjugating enzyme]-L-cysteine = [E1 ubiquitin-activating enzyme]-L-cysteine + S-ubiquitinyl-[E2 ubiquitin-conjugating enzyme]-L-cysteine.. It functions in the pathway protein modification; protein ubiquitination. In terms of biological role, accepts the ubiquitin from the E1 complex and catalyzes its covalent attachment to other proteins. This chain is Ubiquitin-conjugating enzyme E2 28, found in Arabidopsis thaliana (Mouse-ear cress).